The sequence spans 210 residues: Small ribosomal subunit protein uS4 (210 aa).

One can recognise an S4 RNA-binding domain in the interval Arg-99 to Ala-161.

This sequence belongs to the universal ribosomal protein uS4 family. In terms of assembly, part of the 30S ribosomal subunit. Contacts protein S5. The interaction surface between S4 and S5 is involved in control of translational fidelity.

Its function is as follows. One of the primary rRNA binding proteins, it binds directly to 16S rRNA where it nucleates assembly of the body of the 30S subunit. With S5 and S12 plays an important role in translational accuracy. In Solibacter usitatus (strain Ellin6076), this protein is Small ribosomal subunit protein uS4.